Consider the following 430-residue polypeptide: MKILLFVVLFFNVLVGIYSIDTTIFTVCLNCKDGGIIKNVTLANRCSYLICKDENVDQQDQLTRSFSVKKRLTNGYIFDVYKNNQCSTRSNAFEMTKALTCNGEWLELNSFIKVKCGELDPNSSPSPSPSPSPSPSPSPSPSPSPSPSPSPSPSPSPSPSPSPSPSPSPSSSLEESQTPSQTPTPTQTPTPTQTQTTTPTQTQTLTPTQTQTPSQTPTPSQTPKPTQTPTQTPTPSQTPSQTPSQTPSQTPSQTPTPTPSQTPTPTQTPSQTPTQTQTPTPTQTPISSRPMSISTEKPSSSEEVIQASSEFNESSSEDKKKDSESKSSQSESPSPSASASESESASESASASTSVSVSASPLPIMDSSSSDSEENVSPTPLHKRGTPPPPFIHHSSSNELLEKNSDGNSSCKNIPKYLLIMVSLFLYFLF.

A signal peptide spans 1 to 19; it reads MKILLFVVLFFNVLVGIYS. N-linked (GlcNAc...) asparagine glycosylation occurs at asparagine 39. Residues 119 to 408 form a disordered region; the sequence is LDPNSSPSPS…ELLEKNSDGN (290 aa). Residues 124–168 show a composition bias toward pro residues; it reads SPSPSPSPSPSPSPSPSPSPSPSPSPSPSPSPSPSPSPSPSPSPS. 2 stretches are compositionally biased toward low complexity: residues 169–253 and 263–285; these read PSSS…TPSQ and PTPT…TQTP. The span at 286 to 303 shows a compositional bias: polar residues; it reads ISSRPMSISTEKPSSSEE. An N-linked (GlcNAc...) asparagine glycan is attached at asparagine 312. Basic and acidic residues predominate over residues 316–325; it reads SEDKKKDSES. Low complexity predominate over residues 326-370; it reads KSSQSESPSPSASASESESASESASASTSVSVSASPLPIMDSSSS. Residue asparagine 408 is glycosylated (N-linked (GlcNAc...) asparagine).

It is found in the secreted. This is an uncharacterized protein from Dictyostelium discoideum (Social amoeba).